Reading from the N-terminus, the 450-residue chain is Probable ECA polymerase (450 aa).

11 helical membrane passes run 6-26 (FSGL…LTWF), 37-57 (VFFS…TSVL), 63-83 (VGVA…CFYA), 118-138 (VILM…NGFL), 155-175 (GVAL…VYFL), 181-201 (AWLF…MIVG), 207-227 (IIIA…ISLW), 228-248 (MLAA…LKRY), 341-361 (LVVM…GLII), 378-398 (YKAA…IVLA), and 410-430 (VFFI…YWLF).

It belongs to the WzyE family. In terms of assembly, probably part of a complex composed of WzxE, WzyE and WzzE.

It localises to the cell inner membrane. The protein operates within bacterial outer membrane biogenesis; enterobacterial common antigen biosynthesis. In terms of biological role, probably involved in the polymerization of enterobacterial common antigen (ECA) trisaccharide repeat units. The sequence is that of Probable ECA polymerase from Escherichia coli O17:K52:H18 (strain UMN026 / ExPEC).